The following is a 217-amino-acid chain: GTP cyclohydrolase 1 (217 aa).

Zn(2+)-binding residues include Cys-108, His-111, and Cys-179.

It belongs to the GTP cyclohydrolase I family. In terms of assembly, toroid-shaped homodecamer, composed of two pentamers of five dimers.

The enzyme catalyses GTP + H2O = 7,8-dihydroneopterin 3'-triphosphate + formate + H(+). It functions in the pathway cofactor biosynthesis; 7,8-dihydroneopterin triphosphate biosynthesis; 7,8-dihydroneopterin triphosphate from GTP: step 1/1. This chain is GTP cyclohydrolase 1, found in Shewanella denitrificans (strain OS217 / ATCC BAA-1090 / DSM 15013).